A 133-amino-acid polypeptide reads, in one-letter code: Small ribosomal subunit protein uS19 (133 aa).

The protein belongs to the universal ribosomal protein uS19 family.

Its function is as follows. Protein S19 forms a complex with S13 that binds strongly to the 16S ribosomal RNA. In Thermococcus sibiricus (strain DSM 12597 / MM 739), this protein is Small ribosomal subunit protein uS19.